The following is a 486-amino-acid chain: ATP synthase subunit beta (486 aa).

Residue 167–174 (GGAGVGKT) participates in ATP binding.

It belongs to the ATPase alpha/beta chains family. F-type ATPases have 2 components, CF(1) - the catalytic core - and CF(0) - the membrane proton channel. CF(1) has five subunits: alpha(3), beta(3), gamma(1), delta(1), epsilon(1). CF(0) has three main subunits: a(1), b(2) and c(9-12). The alpha and beta chains form an alternating ring which encloses part of the gamma chain. CF(1) is attached to CF(0) by a central stalk formed by the gamma and epsilon chains, while a peripheral stalk is formed by the delta and b chains.

It localises to the cell inner membrane. It catalyses the reaction ATP + H2O + 4 H(+)(in) = ADP + phosphate + 5 H(+)(out). Produces ATP from ADP in the presence of a proton gradient across the membrane. The catalytic sites are hosted primarily by the beta subunits. The chain is ATP synthase subunit beta from Anaplasma marginale (strain St. Maries).